A 215-amino-acid polypeptide reads, in one-letter code: 3-demethoxyubiquinol 3-hydroxylase (215 aa).

Fe cation is bound by residues Glu64, Glu94, His97, Glu146, Glu178, and His181.

Belongs to the COQ7 family. Fe cation serves as cofactor.

Its subcellular location is the cell membrane. It catalyses the reaction a 5-methoxy-2-methyl-3-(all-trans-polyprenyl)benzene-1,4-diol + AH2 + O2 = a 3-demethylubiquinol + A + H2O. Its pathway is cofactor biosynthesis; ubiquinone biosynthesis. Its function is as follows. Catalyzes the hydroxylation of 2-nonaprenyl-3-methyl-6-methoxy-1,4-benzoquinol during ubiquinone biosynthesis. This chain is 3-demethoxyubiquinol 3-hydroxylase, found in Bordetella avium (strain 197N).